The sequence spans 59 residues: Large ribosomal subunit protein uL30 (59 aa).

The protein belongs to the universal ribosomal protein uL30 family. As to quaternary structure, part of the 50S ribosomal subunit.

This Persephonella marina (strain DSM 14350 / EX-H1) protein is Large ribosomal subunit protein uL30.